A 158-amino-acid polypeptide reads, in one-letter code: NADH-quinone oxidoreductase subunit B (158 aa).

Positions 37, 38, 102, and 132 each coordinate [4Fe-4S] cluster.

The protein belongs to the complex I 20 kDa subunit family. As to quaternary structure, NDH-1 is composed of 14 different subunits. Subunits NuoB, C, D, E, F, and G constitute the peripheral sector of the complex. The cofactor is [4Fe-4S] cluster.

It is found in the cell inner membrane. It catalyses the reaction a quinone + NADH + 5 H(+)(in) = a quinol + NAD(+) + 4 H(+)(out). NDH-1 shuttles electrons from NADH, via FMN and iron-sulfur (Fe-S) centers, to quinones in the respiratory chain. Couples the redox reaction to proton translocation (for every two electrons transferred, four hydrogen ions are translocated across the cytoplasmic membrane), and thus conserves the redox energy in a proton gradient. In Methylobacillus flagellatus (strain ATCC 51484 / DSM 6875 / VKM B-1610 / KT), this protein is NADH-quinone oxidoreductase subunit B.